Here is a 424-residue protein sequence, read N- to C-terminus: MFS-type transporter opdF (424 aa).

The segment covering 1 to 10 has biased composition (basic and acidic residues); that stretch reads MSDTSLEKGN. Residues 1–23 are disordered; it reads MSDTSLEKGNEGPTAEAPKVAPP. Helical transmembrane passes span 36-56, 102-122, 127-147, 160-180, and 187-207; these read VAGA…IALF, VPIA…SLST, LMLS…TPAM, IVGG…PLMV, and VGFG…LVFA. N-linked (GlcNAc...) asparagine glycosylation is present at Asn208. The next 6 helical transmembrane spans lie at 239–259, 265–285, 299–319, 329–349, 364–384, and 391–411; these read LCVA…YIVV, GMST…SFFG, FNVM…LWLP, FAAL…VLIV, VLAF…AIAA, and TYTC…LAAL.

Belongs to the major facilitator superfamily. Monocarboxylate porter (TC 2.A.1.13) family.

The protein localises to the membrane. MFS-type transporter; part of the gene cluster that mediates the biosynthesis of oxopyrrolidines, polyketide-amino acid hybrid compounds with feature structures of tetramic acid. The polypeptide is MFS-type transporter opdF (Penicillium oxalicum (strain 114-2 / CGMCC 5302) (Penicillium decumbens)).